The chain runs to 484 residues: Cobyric acid synthase (484 aa).

The 188-residue stretch at 248-435 (VLKVIVPVLP…LHGLFEGSQS (188 aa)) folds into the GATase cobBQ-type domain. Residue Cys-329 is the Nucleophile of the active site. Residue His-427 is part of the active site.

This sequence belongs to the CobB/CobQ family. CobQ subfamily.

It functions in the pathway cofactor biosynthesis; adenosylcobalamin biosynthesis. Functionally, catalyzes amidations at positions B, D, E, and G on adenosylcobyrinic A,C-diamide. NH(2) groups are provided by glutamine, and one molecule of ATP is hydrogenolyzed for each amidation. This chain is Cobyric acid synthase, found in Pseudomonas putida (strain W619).